The chain runs to 128 residues: MAKLTKDELIEAFKEMTLIELSEFVKEFEEVFEVTAAAPVAVAAAGAAGGEAAAAEEKDEFDVVLEDAGAKKIGVIKVVRELVSGLGLKEAKELVEGAPKAILEGANKDDAEAAKAKLEEAGAKVTLK.

Belongs to the bacterial ribosomal protein bL12 family. Homodimer. Part of the ribosomal stalk of the 50S ribosomal subunit. Forms a multimeric L10(L12)X complex, where L10 forms an elongated spine to which 2 to 4 L12 dimers bind in a sequential fashion. Binds GTP-bound translation factors.

Its function is as follows. Forms part of the ribosomal stalk which helps the ribosome interact with GTP-bound translation factors. Is thus essential for accurate translation. In Corynebacterium efficiens (strain DSM 44549 / YS-314 / AJ 12310 / JCM 11189 / NBRC 100395), this protein is Large ribosomal subunit protein bL12.